The following is an 80-amino-acid chain: Exodeoxyribonuclease 7 small subunit (80 aa).

The protein belongs to the XseB family. Heterooligomer composed of large and small subunits.

It is found in the cytoplasm. It catalyses the reaction Exonucleolytic cleavage in either 5'- to 3'- or 3'- to 5'-direction to yield nucleoside 5'-phosphates.. Functionally, bidirectionally degrades single-stranded DNA into large acid-insoluble oligonucleotides, which are then degraded further into small acid-soluble oligonucleotides. In Phenylobacterium zucineum (strain HLK1), this protein is Exodeoxyribonuclease 7 small subunit.